Consider the following 103-residue polypeptide: Stefin-3 (103 aa).

Positions Gln52–Gly56 match the Secondary area of contact motif.

Belongs to the cystatin family.

The protein localises to the cytoplasm. Functionally, this is an intracellular thiol proteinase inhibitor. The sequence is that of Stefin-3 (Stfa3) from Mus musculus (Mouse).